Here is a 334-residue protein sequence, read N- to C-terminus: Ventral anterior homeobox 1 (334 aa).

Basic and acidic residues predominate over residues 1-34 (MFGKPDKMDVRCHSDAEAARVSKNAHKESRESKG). The tract at residues 1-41 (MFGKPDKMDVRCHSDAEAARVSKNAHKESRESKGAEGNLPA) is disordered. Positions 100-159 (PKRTRTSFTAEQLYRLEMEFQRCQYVVGRERTELARQLNLSETQVKVWFQNRRTKQKKDQ) form a DNA-binding region, homeobox. 2 disordered regions span residues 234-263 (PGPA…GLHA) and 314-334 (SAFE…KALD). The segment covering 323–334 (NNKEGAEKKALD) has biased composition (basic and acidic residues).

It belongs to the EMX homeobox family.

The protein resides in the nucleus. Its function is as follows. Transcription factor that may function in dorsoventral specification of the forebrain. Required for axon guidance and major tract formation in the developing forebrain. May contribute to the differentiation of the neuroretina, pigmented epithelium and optic stalk. The sequence is that of Ventral anterior homeobox 1 (VAX1) from Homo sapiens (Human).